The chain runs to 171 residues: ATP synthase subunit b (171 aa).

Residues phenylalanine 2–leucine 22 form a helical membrane-spanning segment.

This sequence belongs to the ATPase B chain family. F-type ATPases have 2 components, F(1) - the catalytic core - and F(0) - the membrane proton channel. F(1) has five subunits: alpha(3), beta(3), gamma(1), delta(1), epsilon(1). F(0) has three main subunits: a(1), b(2) and c(10-14). The alpha and beta chains form an alternating ring which encloses part of the gamma chain. F(1) is attached to F(0) by a central stalk formed by the gamma and epsilon chains, while a peripheral stalk is formed by the delta and b chains.

It localises to the cell inner membrane. Functionally, f(1)F(0) ATP synthase produces ATP from ADP in the presence of a proton or sodium gradient. F-type ATPases consist of two structural domains, F(1) containing the extramembraneous catalytic core and F(0) containing the membrane proton channel, linked together by a central stalk and a peripheral stalk. During catalysis, ATP synthesis in the catalytic domain of F(1) is coupled via a rotary mechanism of the central stalk subunits to proton translocation. Component of the F(0) channel, it forms part of the peripheral stalk, linking F(1) to F(0). The sequence is that of ATP synthase subunit b from Helicobacter pylori (strain HPAG1).